The primary structure comprises 186 residues: NADH-ubiquinone oxidoreductase 17.8 kDa subunit, mitochondrial (186 aa).

The transit peptide at 1 to 26 directs the protein to the mitochondrion; sequence MSSFRLGVSRVARQVRAPCVRNTRRY. The disordered stretch occupies residues 22–49; it reads NTRRYASDSHAPADHTHSAAGHGEHHHA. Basic and acidic residues predominate over residues 26–49; that stretch reads YASDSHAPADHTHSAAGHGEHHHA. Residues 58 to 78 form a helical membrane-spanning segment; sequence LGTAFYVIFGAIPAFGALYYF.

In terms of assembly, complex I is composed of about 40 different subunits.

It is found in the mitochondrion inner membrane. The enzyme catalyses a ubiquinone + NADH + 5 H(+)(in) = a ubiquinol + NAD(+) + 4 H(+)(out). Transfer of electrons from NADH to the respiratory chain. The immediate electron acceptor for the enzyme is believed to be ubiquinone. The sequence is that of NADH-ubiquinone oxidoreductase 17.8 kDa subunit, mitochondrial (nuo17.8) from Neurospora crassa (strain ATCC 24698 / 74-OR23-1A / CBS 708.71 / DSM 1257 / FGSC 987).